A 241-amino-acid polypeptide reads, in one-letter code: General transcription factor IIF subunit 2 (241 aa).

It belongs to the TFIIF beta subunit family. Heterodimer of an alpha and a beta subunit.

Its subcellular location is the nucleus. Functionally, TFIIF is a general transcription initiation factor that binds to RNA polymerase II and helps to recruit it to the initiation complex in collaboration with TFIIB. This is General transcription factor IIF subunit 2 (gtf2f2) from Dictyostelium discoideum (Social amoeba).